Reading from the N-terminus, the 336-residue chain is Methionyl-tRNA formyltransferase (336 aa).

112-115 serves as a coordination point for (6S)-5,6,7,8-tetrahydrofolate; sequence SILP.

It belongs to the Fmt family.

The enzyme catalyses L-methionyl-tRNA(fMet) + (6R)-10-formyltetrahydrofolate = N-formyl-L-methionyl-tRNA(fMet) + (6S)-5,6,7,8-tetrahydrofolate + H(+). In terms of biological role, attaches a formyl group to the free amino group of methionyl-tRNA(fMet). The formyl group appears to play a dual role in the initiator identity of N-formylmethionyl-tRNA by promoting its recognition by IF2 and preventing the misappropriation of this tRNA by the elongation apparatus. The protein is Methionyl-tRNA formyltransferase of Trichodesmium erythraeum (strain IMS101).